The following is a 103-amino-acid chain: Histone H4.2 (103 aa).

A compositionally biased stretch (gly residues) spans 1–14; the sequence is MSGRGKGGKGLGKG. The tract at residues 1-20 is disordered; that stretch reads MSGRGKGGKGLGKGGAKRHR. Residue Lys6 is modified to N6-acetyl-N6-methyllysine; alternate. N6-methyllysine; alternate occurs at positions 6, 9, and 13. At Lys13 the chain carries N6-acetyl-N6-methyllysine; alternate. Residues 17–21 mediate DNA binding; sequence KRHRK. An N6-glutaryllysine modification is found at Lys92.

Belongs to the histone H4 family. As to quaternary structure, the nucleosome is a histone octamer containing two molecules each of H2A, H2B, H3 and H4 assembled in one H3-H4 heterotetramer and two H2A-H2B heterodimers. The octamer wraps approximately 147 bp of DNA. In terms of processing, glutarylation at Lys-92 (H4K91glu) destabilizes nucleosomes by promoting dissociation of the H2A-H2B dimers from nucleosomes.

It is found in the nucleus. The protein resides in the chromosome. In terms of biological role, core component of nucleosome. Nucleosomes wrap and compact DNA into chromatin, limiting DNA accessibility to the cellular machineries which require DNA as a template. Histones thereby play a central role in transcription regulation, DNA repair, DNA replication and chromosomal stability. DNA accessibility is regulated via a complex set of post-translational modifications of histones, also called histone code, and nucleosome remodeling. The sequence is that of Histone H4.2 (hhfB) from Emericella nidulans (strain FGSC A4 / ATCC 38163 / CBS 112.46 / NRRL 194 / M139) (Aspergillus nidulans).